Here is a 358-residue protein sequence, read N- to C-terminus: Photosystem II protein D1 1 (358 aa).

Transmembrane regions (helical) follow at residues 28–45, 117–132, and 141–155; these read YVGW…AATI, HFLI…QWEL, and WICV…AAFA. Histidine 117 is a binding site for chlorophyll a. Tyrosine 125 contacts pheophytin a. [CaMn4O5] cluster-binding residues include aspartate 169 and glutamate 188. A helical membrane pass occupies residues 196 to 217; it reads FHMLGVAGVFGGSLFSAMHGSL. Position 197 (histidine 197) interacts with chlorophyll a. A quinone is bound by residues histidine 214 and 263-264; that span reads SF. Position 214 (histidine 214) interacts with Fe cation. Residue histidine 271 participates in Fe cation binding. A helical transmembrane segment spans residues 273 to 287; it reads FLGAWPVIGIWFTSM. [CaMn4O5] cluster is bound by residues histidine 331, glutamate 332, aspartate 341, and alanine 343. Residues 344 to 358 constitute a propeptide that is removed on maturation; it reads AAESTPVALQAPAIG.

Belongs to the reaction center PufL/M/PsbA/D family. As to quaternary structure, PSII is composed of 1 copy each of membrane proteins PsbA, PsbB, PsbC, PsbD, PsbE, PsbF, PsbH, PsbI, PsbJ, PsbK, PsbL, PsbM, PsbT, PsbX, PsbY, PsbZ, Psb30/Ycf12, peripheral proteins PsbO, CyanoQ (PsbQ), PsbU, PsbV and a large number of cofactors. It forms dimeric complexes. The cofactor is The D1/D2 heterodimer binds P680, chlorophylls that are the primary electron donor of PSII, and subsequent electron acceptors. It shares a non-heme iron and each subunit binds pheophytin, quinone, additional chlorophylls, carotenoids and lipids. D1 provides most of the ligands for the Mn4-Ca-O5 cluster of the oxygen-evolving complex (OEC). There is also a Cl(-1) ion associated with D1 and D2, which is required for oxygen evolution. The PSII complex binds additional chlorophylls, carotenoids and specific lipids.. Post-translationally, tyr-160 forms a radical intermediate that is referred to as redox-active TyrZ, YZ or Y-Z. C-terminally processed by CtpA; processing is essential to allow assembly of the oxygen-evolving complex and thus photosynthetic growth.

Its subcellular location is the cellular thylakoid membrane. The catalysed reaction is 2 a plastoquinone + 4 hnu + 2 H2O = 2 a plastoquinol + O2. Functionally, photosystem II (PSII) is a light-driven water:plastoquinone oxidoreductase that uses light energy to abstract electrons from H(2)O, generating O(2) and a proton gradient subsequently used for ATP formation. It consists of a core antenna complex that captures photons, and an electron transfer chain that converts photonic excitation into a charge separation. The D1/D2 (PsbA/PsbD) reaction center heterodimer binds P680, the primary electron donor of PSII as well as several subsequent electron acceptors. This Synechococcus sp. (strain CC9902) protein is Photosystem II protein D1 1.